The sequence spans 244 residues: Cobalt transport protein CbiM (244 aa).

Residues Met-1–Ala-27 form the signal peptide. A run of 6 helical transmembrane segments spans residues Pro-36 to Ile-56, Gly-65 to Leu-85, Leu-102 to Phe-122, Thr-134 to Tyr-154, Ile-168 to Ala-188, and Leu-196 to Ile-216.

It belongs to the CbiM family. As to quaternary structure, forms an energy-coupling factor (ECF) transporter complex composed of an ATP-binding protein (A component, CbiO), a transmembrane protein (T component, CbiQ) and 2 possible substrate-capture proteins (S components, CbiM and CbiN) of unknown stoichimetry.

It localises to the cell membrane. Its pathway is cofactor biosynthesis; adenosylcobalamin biosynthesis. Functionally, part of the energy-coupling factor (ECF) transporter complex CbiMNOQ involved in cobalt import. In Carboxydothermus hydrogenoformans (strain ATCC BAA-161 / DSM 6008 / Z-2901), this protein is Cobalt transport protein CbiM.